The sequence spans 53 residues: UPF0391 membrane protein PC1_0455 (53 aa).

Helical transmembrane passes span 4-24 (WGII…GGLA) and 30-47 (AAKI…LSLF).

This sequence belongs to the UPF0391 family.

It localises to the cell membrane. This is UPF0391 membrane protein PC1_0455 from Pectobacterium carotovorum subsp. carotovorum (strain PC1).